The following is a 454-amino-acid chain: Probable glycine dehydrogenase (decarboxylating) subunit 1 (454 aa).

The protein belongs to the GcvP family. N-terminal subunit subfamily. As to quaternary structure, the glycine cleavage system is composed of four proteins: P, T, L and H. In this organism, the P 'protein' is a heterodimer of two subunits.

It catalyses the reaction N(6)-[(R)-lipoyl]-L-lysyl-[glycine-cleavage complex H protein] + glycine + H(+) = N(6)-[(R)-S(8)-aminomethyldihydrolipoyl]-L-lysyl-[glycine-cleavage complex H protein] + CO2. Functionally, the glycine cleavage system catalyzes the degradation of glycine. The P protein binds the alpha-amino group of glycine through its pyridoxal phosphate cofactor; CO(2) is released and the remaining methylamine moiety is then transferred to the lipoamide cofactor of the H protein. This Sorangium cellulosum (strain So ce56) (Polyangium cellulosum (strain So ce56)) protein is Probable glycine dehydrogenase (decarboxylating) subunit 1.